The sequence spans 162 residues: Phosphopantetheine adenylyltransferase (162 aa).

Position 10 (Thr-10) interacts with substrate. ATP contacts are provided by residues 10–11 and His-18; that span reads TF. Residues Lys-42, Met-74, and Arg-88 each coordinate substrate. ATP contacts are provided by residues 89–91, Glu-99, and 124–130; these read GLR and YAFLSST.

This sequence belongs to the bacterial CoaD family. In terms of assembly, homohexamer. It depends on Mg(2+) as a cofactor.

The protein resides in the cytoplasm. It carries out the reaction (R)-4'-phosphopantetheine + ATP + H(+) = 3'-dephospho-CoA + diphosphate. Its pathway is cofactor biosynthesis; coenzyme A biosynthesis; CoA from (R)-pantothenate: step 4/5. Its function is as follows. Reversibly transfers an adenylyl group from ATP to 4'-phosphopantetheine, yielding dephospho-CoA (dPCoA) and pyrophosphate. This is Phosphopantetheine adenylyltransferase from Aliivibrio salmonicida (strain LFI1238) (Vibrio salmonicida (strain LFI1238)).